Reading from the N-terminus, the 449-residue chain is Putative glycosyltransferase 7 (449 aa).

At 1–32 (MVSPETSSSHYQSSPMAKYAGTRTRPVVCISD) the chain is on the cytoplasmic side. Residues 33–53 (VVLFLGGAFMSLILVWSFFSF) form a helical; Signal-anchor for type II membrane protein membrane-spanning segment. The Lumenal portion of the chain corresponds to 54-449 (SSISPNLTVK…VPFDYPDEPW (396 aa)). N-linked (GlcNAc...) asparagine glycans are attached at residues Asn-59, Asn-123, and Asn-332.

This sequence belongs to the glycosyltransferase 34 family.

Its subcellular location is the golgi apparatus membrane. In terms of biological role, probable glycosyltransferase that may be involved in the biosynthesis of xyloglucan. In Arabidopsis thaliana (Mouse-ear cress), this protein is Putative glycosyltransferase 7 (GT7).